Consider the following 191-residue polypeptide: Dephospho-CoA kinase (191 aa).

The region spanning 3 to 191 (AIGITGSYAS…KLIKDLECRV (189 aa)) is the DPCK domain. 11 to 16 (ASGKTF) provides a ligand contact to ATP.

It belongs to the CoaE family.

The protein localises to the cytoplasm. It carries out the reaction 3'-dephospho-CoA + ATP = ADP + CoA + H(+). It functions in the pathway cofactor biosynthesis; coenzyme A biosynthesis; CoA from (R)-pantothenate: step 5/5. Its function is as follows. Catalyzes the phosphorylation of the 3'-hydroxyl group of dephosphocoenzyme A to form coenzyme A. This chain is Dephospho-CoA kinase, found in Rickettsia prowazekii (strain Madrid E).